The chain runs to 274 residues: 3-methyl-2-oxobutanoate hydroxymethyltransferase (274 aa).

Residues aspartate 44 and aspartate 83 each coordinate Mg(2+). 3-methyl-2-oxobutanoate-binding positions include 44–45, aspartate 83, and lysine 113; that span reads DS. A Mg(2+)-binding site is contributed by glutamate 115. The Proton acceptor role is filled by glutamate 182.

Belongs to the PanB family. Homodecamer; pentamer of dimers. It depends on Mg(2+) as a cofactor.

It is found in the cytoplasm. The catalysed reaction is 3-methyl-2-oxobutanoate + (6R)-5,10-methylene-5,6,7,8-tetrahydrofolate + H2O = 2-dehydropantoate + (6S)-5,6,7,8-tetrahydrofolate. The protein operates within cofactor biosynthesis; (R)-pantothenate biosynthesis; (R)-pantoate from 3-methyl-2-oxobutanoate: step 1/2. In terms of biological role, catalyzes the reversible reaction in which hydroxymethyl group from 5,10-methylenetetrahydrofolate is transferred onto alpha-ketoisovalerate to form ketopantoate. This chain is 3-methyl-2-oxobutanoate hydroxymethyltransferase, found in Campylobacter jejuni subsp. jejuni serotype O:6 (strain 81116 / NCTC 11828).